The following is a 347-amino-acid chain: Heat-inducible transcription repressor HrcA (347 aa).

This sequence belongs to the HrcA family.

In terms of biological role, negative regulator of class I heat shock genes (grpE-dnaK-dnaJ and groELS operons). Prevents heat-shock induction of these operons. The sequence is that of Heat-inducible transcription repressor HrcA from Lactococcus lactis subsp. cremoris (strain SK11).